The primary structure comprises 247 residues: Carboxy-S-adenosyl-L-methionine synthase (247 aa).

Residues Tyr39, Gly64–Ser66, Asp89–Asn90, Asp117–Ile118, Asn132, and Arg199 each bind S-adenosyl-L-methionine.

Belongs to the class I-like SAM-binding methyltransferase superfamily. Cx-SAM synthase family. Homodimer.

It catalyses the reaction prephenate + S-adenosyl-L-methionine = carboxy-S-adenosyl-L-methionine + 3-phenylpyruvate + H2O. Its function is as follows. Catalyzes the conversion of S-adenosyl-L-methionine (SAM) to carboxy-S-adenosyl-L-methionine (Cx-SAM). The sequence is that of Carboxy-S-adenosyl-L-methionine synthase from Salmonella arizonae (strain ATCC BAA-731 / CDC346-86 / RSK2980).